Here is a 2112-residue protein sequence, read N- to C-terminus: Phenolphthiocerol synthesis polyketide synthase type I Pks15/1 (2112 aa).

Positions 46 to 469 (TEPVAVVGIG…GTNAHLILEE (424 aa)) constitute a Ketosynthase family 3 (KS3) domain. Catalysis depends on for beta-ketoacyl synthase activity residues Cys-216, His-351, and His-391. An acyltransferase region spans residues 579–893 (TVVVFPGQGA…GQVFTTGVPV (315 aa)). The active-site For acyltransferase activity is Ser-670. Residues 941–1063 (HALLGAVVER…GMLGVAAAET (123 aa)) form an N-terminal hotdog fold region. Residues 941-1101 (HALLGAVVER…YAYGPAFQGL (161 aa)) form a dehydratase region. A PKS/mFAS DH domain is found at 941 to 1215 (HALLGAVVER…TRPITAEQLR (275 aa)). Catalysis depends on His-973, which acts as the Proton acceptor; for dehydratase activity. The tract at residues 1075-1215 (AESVDISDGY…TRPITAEQLR (141 aa)) is C-terminal hotdog fold. The active-site Proton donor; for dehydratase activity is Asp-1136. An enoylreductase region spans residues 1406-1711 (GTLEDLVIQP…QARHIGKVVL (306 aa)). Residues 1536–1553 (VLIH…VQLA) and 1725–1740 (TVVI…GVLA) each bind NADP(+). The interval 1724 to 1905 (GTVVITGATG…SLAWGLWEQP (182 aa)) is beta-ketoacyl reductase. The 76-residue stretch at 2010-2085 (ELLVGLVCLQ…AVAEYVAQQM (76 aa)) folds into the Carrier domain. Residue Ser-2045 is modified to O-(pantetheine 4'-phosphoryl)serine. The segment covering 2084–2100 (QMSGSRPTESGDPTSQV) has biased composition (polar residues). A disordered region spans residues 2084 to 2112 (QMSGSRPTESGDPTSQVVEPAAAEVSVHA).

This sequence belongs to the thiolase-like superfamily. Beta-ketoacyl-ACP synthases family. Pantetheine 4'-phosphate serves as cofactor.

It carries out the reaction a fatty acyl-[ACP] + malonyl-[ACP] + H(+) = a 3-oxoacyl-[ACP] + holo-[ACP] + CO2. It participates in lipid metabolism; fatty acid biosynthesis. Its function is as follows. Catalyzes the elongation by iterative transfer of p-hydroxybenzoyl group from FadD22 (pHBA-S-FAdD22) to form p-hydroxyphenylalkanoate (pHPA) intermediates during phenolphthiocerol (PPOL) biosynthesis. PPOL is an important intermediate in the biosynthesis of phenolic glycolipid (mycosid B). This is Phenolphthiocerol synthesis polyketide synthase type I Pks15/1 (pks15/1) from Mycobacterium bovis (strain ATCC BAA-935 / AF2122/97).